The sequence spans 119 residues: UPF0102 protein CGSHiGG_01960 (119 aa).

Belongs to the UPF0102 family.

The chain is UPF0102 protein CGSHiGG_01960 from Haemophilus influenzae (strain PittGG).